The following is a 429-amino-acid chain: UDP-N-acetylglucosamine 1-carboxyvinyltransferase (429 aa).

Residue 22–23 (KN) coordinates phosphoenolpyruvate. Residue arginine 102 participates in UDP-N-acetyl-alpha-D-glucosamine binding. The active-site Proton donor is cysteine 126. Cysteine 126 is modified (2-(S-cysteinyl)pyruvic acid O-phosphothioketal). UDP-N-acetyl-alpha-D-glucosamine-binding positions include 131–135 (RPVDL), aspartate 316, and isoleucine 338.

The protein belongs to the EPSP synthase family. MurA subfamily.

The protein localises to the cytoplasm. The enzyme catalyses phosphoenolpyruvate + UDP-N-acetyl-alpha-D-glucosamine = UDP-N-acetyl-3-O-(1-carboxyvinyl)-alpha-D-glucosamine + phosphate. It functions in the pathway cell wall biogenesis; peptidoglycan biosynthesis. Functionally, cell wall formation. Adds enolpyruvyl to UDP-N-acetylglucosamine. This chain is UDP-N-acetylglucosamine 1-carboxyvinyltransferase, found in Afipia carboxidovorans (strain ATCC 49405 / DSM 1227 / KCTC 32145 / OM5) (Oligotropha carboxidovorans).